We begin with the raw amino-acid sequence, 350 residues long: MEDRIVTPLNIRGDAESEYSLRPKSLKEYIGQRKVKEKLKIFIEAAKNRKEALDHVLFYGPPGLGKTTLANIIALEMGGNLKITSGPAIERAGDLAAILTGLDDRDVLFIDEIHRLNRSVEEILYPAMEDYALDIVIGKGASTKSIRLDLPRFTLIGATTRVGLLTAPLRDRFGVLCPMDFYDQEELSEIVVRSCNILKIRIEPEASVEIGKRSRGTPRIANRLLKRVRDYSEVKGNGTIDLKTSKAALELLEVDKEGFDSIDNKILRAIIDNFNGGPVGIETLAYFIGEELDTIEDVYEPYLLQKGFIIRTPRGRIASDSAYKHFNKTRKSSNAYHKNLKQSSLFDGEV.

Residues 1–182 (MEDRIVTPLN…FGVLCPMDFY (182 aa)) form a large ATPase domain (RuvB-L) region. Residues leucine 21, arginine 22, glycine 63, lysine 66, threonine 67, threonine 68, 129-131 (EDY), arginine 172, tyrosine 182, and arginine 219 contribute to the ATP site. Threonine 67 lines the Mg(2+) pocket. The interval 183–253 (DQEELSEIVV…TSKAALELLE (71 aa)) is small ATPAse domain (RuvB-S). A head domain (RuvB-H) region spans residues 256–350 (KEGFDSIDNK…KQSSLFDGEV (95 aa)). Positions 311 and 316 each coordinate DNA.

Belongs to the RuvB family. Homohexamer. Forms an RuvA(8)-RuvB(12)-Holliday junction (HJ) complex. HJ DNA is sandwiched between 2 RuvA tetramers; dsDNA enters through RuvA and exits via RuvB. An RuvB hexamer assembles on each DNA strand where it exits the tetramer. Each RuvB hexamer is contacted by two RuvA subunits (via domain III) on 2 adjacent RuvB subunits; this complex drives branch migration. In the full resolvosome a probable DNA-RuvA(4)-RuvB(12)-RuvC(2) complex forms which resolves the HJ.

It localises to the cytoplasm. The enzyme catalyses ATP + H2O = ADP + phosphate + H(+). Its function is as follows. The RuvA-RuvB-RuvC complex processes Holliday junction (HJ) DNA during genetic recombination and DNA repair, while the RuvA-RuvB complex plays an important role in the rescue of blocked DNA replication forks via replication fork reversal (RFR). RuvA specifically binds to HJ cruciform DNA, conferring on it an open structure. The RuvB hexamer acts as an ATP-dependent pump, pulling dsDNA into and through the RuvAB complex. RuvB forms 2 homohexamers on either side of HJ DNA bound by 1 or 2 RuvA tetramers; 4 subunits per hexamer contact DNA at a time. Coordinated motions by a converter formed by DNA-disengaged RuvB subunits stimulates ATP hydrolysis and nucleotide exchange. Immobilization of the converter enables RuvB to convert the ATP-contained energy into a lever motion, pulling 2 nucleotides of DNA out of the RuvA tetramer per ATP hydrolyzed, thus driving DNA branch migration. The RuvB motors rotate together with the DNA substrate, which together with the progressing nucleotide cycle form the mechanistic basis for DNA recombination by continuous HJ branch migration. Branch migration allows RuvC to scan DNA until it finds its consensus sequence, where it cleaves and resolves cruciform DNA. This Clostridium kluyveri (strain NBRC 12016) protein is Holliday junction branch migration complex subunit RuvB.